A 103-amino-acid polypeptide reads, in one-letter code: Large ribosomal subunit protein bL21 (103 aa).

This sequence belongs to the bacterial ribosomal protein bL21 family. As to quaternary structure, part of the 50S ribosomal subunit. Contacts protein L20.

In terms of biological role, this protein binds to 23S rRNA in the presence of protein L20. This chain is Large ribosomal subunit protein bL21, found in Wigglesworthia glossinidia brevipalpis.